Consider the following 453-residue polypeptide: Cytochrome P450 monooxygenase CYP2 (453 aa).

A helical membrane pass occupies residues 13-29 (MVITMLHGSSTYSLLAS). An N-linked (GlcNAc...) asparagine glycan is attached at Asn-85. Position 397 (Cys-397) interacts with heme.

Belongs to the cytochrome P450 family. Heme is required as a cofactor.

It is found in the membrane. It participates in secondary metabolite biosynthesis. Its function is as follows. Cytochrome P450 monooxygenase; part of the gene cluster that mediates the biosynthesis of a tyrosine-derived cytochalasan acting as a fungal signal recognized by resistant rice plants and leads to avirulence in Pi33 resistant rice cultivars. The first step in the pathway is catalyzed by the hybrid PKS-NRPS ACE1, assisted by the enoyl reductase RAP1, that are responsible for fusion of the tyrosine precursor and the polyketide backbone. The polyketide synthase module (PKS) of ACE1 is responsible for the synthesis of the polyketide backbone and the downstream nonribosomal peptide synthetase (NRPS) amidates the carboxyl end of the polyketide with the tyrosine precursor. Because ACE1 lacks a designated enoylreductase (ER) domain, the required activity is provided the enoyl reductase RAP1. Reduction by the hydrolyase ORFZ, followed by dehydration and intra-molecular Diels-Alder cyclization by the Diels-Alderase ORF3 then yield the required isoindolone-fused macrocycle. A number of oxidative steps catalyzed by the tailoring enzymes identified within the cluster, including cytochrome P450 monooxygenases CYP1 to CYP4, the FAD-linked oxidoreductase OXR2 and the short-chain dehydrogenase/reductase OXR1, are further required to afford the final cytochalasans that confer avirulence and which have still to be identified. The monooxygenase CYP1 has been shown to be a site-selective C-18 hydroxylase whereas the function of CYP3 is the site-selective epoxidation of the C-6/C-7 olefin that is present in some intermediate compounds. Finally, SYN2 and RAP2 are not required for avirulence in Pi33 resistant rice cultivars. In Pyricularia oryzae (strain 70-15 / ATCC MYA-4617 / FGSC 8958) (Rice blast fungus), this protein is Cytochrome P450 monooxygenase CYP2.